Consider the following 453-residue polypeptide: MQVNETLAEGLRHEFQVSIPAAEIAAKADERLDDLKDKVKINGFRPGKVPVSHLKKLYGRSVMVETIEDTIRDTNMQIVNDRGLKLAGNPKVTMPSEPKEIEDILAGNSDLSYSVAIEVVPPIELADFKSFTIEKPVVDVSDADVDEAVERIAEQNRTYTTRAEGAKAENGDRITISFKGTIDGELFEGGSSEDILVVLGSNALIPGFEEQLVGAGVGETRTVKASFPGNYADSELAGKDAEFETTVSLIEAPEELKIDDEFAKLLGLEELDQLRQVVREQLSAEFARAMRQHVKRALFDRLDETHKFDAPPTLVEEEFEQVWKTIMAEMEKEKKTFADENTTEEEARAEYRRIADRRVRLSLVLSEIGEKNGITVADDEINRALISRARQTPGREKEIWDYYQRNPQALAQIRAPLFENKVVDFILELATITEKSVTREDLFKEHEAHSAEM.

In terms of domain architecture, PPIase FKBP-type spans 171–256 (GDRITISFKG…VSLIEAPEEL (86 aa)).

Belongs to the FKBP-type PPIase family. Tig subfamily.

The protein resides in the cytoplasm. It carries out the reaction [protein]-peptidylproline (omega=180) = [protein]-peptidylproline (omega=0). Functionally, involved in protein export. Acts as a chaperone by maintaining the newly synthesized protein in an open conformation. Functions as a peptidyl-prolyl cis-trans isomerase. In Nitrobacter winogradskyi (strain ATCC 25391 / DSM 10237 / CIP 104748 / NCIMB 11846 / Nb-255), this protein is Trigger factor.